Consider the following 371-residue polypeptide: MIAFISNYITFKTNRTYKNNICQLHCQSLNDNDIEARKIKEEAERRKQQAERNRMQKQMKIDRLNAIPEDAEAGTVEEFMYKDGVKEILEKLDNDLVGLVPVKSRVREIAALLVVDKLRRNLGLDTSVPSLHMCFTGAPGTGKTTVAMRMGQILQRMGYCRSGHLVVATRDDLVGQYVGHTAPKTKEVIKKAMGGVLLIDEAYYLYNASNDRDYGQESIEILLNVMEENREDLVVVLAGYKDRMDKFFSFIPGMSSRVGNHIEFPNYEAEELLSIAKVMCRDLEYEMSKDAEPIFFEYIKKRMTMPYFSNARTVRNAVDRARMRAAIRLFNQATSGNSNGLVSKKQLMTLEKEDFVSVEELIARGDNAIVE.

A chloroplast-targeting transit peptide spans 1–54; that stretch reads MIAFISNYITFKTNRTYKNNICQLHCQSLNDNDIEARKIKEEAERRKQQAERNR. 137-144 lines the ATP pocket; the sequence is GAPGTGKT.

It belongs to the CbxX/CfxQ family.

It is found in the plastid. Its subcellular location is the chloroplast. Functionally, seems to be necessary for the expression of RuBisCO. The sequence is that of Protein cbbX homolog, chloroplastic (cbbX) from Guillardia theta (Cryptophyte).